We begin with the raw amino-acid sequence, 329 residues long: Holliday junction branch migration complex subunit RuvB (329 aa).

The tract at residues 1 to 180 (MKNILQSTEC…FGIPIHLEFY (180 aa)) is large ATPase domain (RuvB-L). ATP is bound by residues Ile-19, Arg-20, Gly-61, Lys-64, Thr-65, Thr-66, 127–129 (EDF), Arg-170, Tyr-180, and Arg-217. Thr-65 provides a ligand contact to Mg(2+). Positions 181–252 (STEELIKVIQ…FADKALLRLG (72 aa)) are small ATPAse domain (RuvB-S). Positions 255 to 329 (KLGLDRQDIQ…ISYLKEQSYI (75 aa)) are head domain (RuvB-H). Arg-308 and Arg-313 together coordinate DNA.

It belongs to the RuvB family. Homohexamer. Forms an RuvA(8)-RuvB(12)-Holliday junction (HJ) complex. HJ DNA is sandwiched between 2 RuvA tetramers; dsDNA enters through RuvA and exits via RuvB. An RuvB hexamer assembles on each DNA strand where it exits the tetramer. Each RuvB hexamer is contacted by two RuvA subunits (via domain III) on 2 adjacent RuvB subunits; this complex drives branch migration. In the full resolvosome a probable DNA-RuvA(4)-RuvB(12)-RuvC(2) complex forms which resolves the HJ.

The protein resides in the cytoplasm. It carries out the reaction ATP + H2O = ADP + phosphate + H(+). Its function is as follows. The RuvA-RuvB-RuvC complex processes Holliday junction (HJ) DNA during genetic recombination and DNA repair, while the RuvA-RuvB complex plays an important role in the rescue of blocked DNA replication forks via replication fork reversal (RFR). RuvA specifically binds to HJ cruciform DNA, conferring on it an open structure. The RuvB hexamer acts as an ATP-dependent pump, pulling dsDNA into and through the RuvAB complex. RuvB forms 2 homohexamers on either side of HJ DNA bound by 1 or 2 RuvA tetramers; 4 subunits per hexamer contact DNA at a time. Coordinated motions by a converter formed by DNA-disengaged RuvB subunits stimulates ATP hydrolysis and nucleotide exchange. Immobilization of the converter enables RuvB to convert the ATP-contained energy into a lever motion, pulling 2 nucleotides of DNA out of the RuvA tetramer per ATP hydrolyzed, thus driving DNA branch migration. The RuvB motors rotate together with the DNA substrate, which together with the progressing nucleotide cycle form the mechanistic basis for DNA recombination by continuous HJ branch migration. Branch migration allows RuvC to scan DNA until it finds its consensus sequence, where it cleaves and resolves cruciform DNA. The protein is Holliday junction branch migration complex subunit RuvB of Ehrlichia canis (strain Jake).